An 86-amino-acid chain; its full sequence is U15-lycotoxin-Ls1d (86 aa).

The signal sequence occupies residues 1–20 (MNSKIFAVLLLLAFLSCVLS). The 46-residue stretch at 21–66 (DQYCPKSSITACKKMNIRNDCCKDDDCTGGSWCCATPCGNFCKYPT) folds into the WAP domain. 5 cysteine pairs are disulfide-bonded: Cys24–Cys54, Cys32–Cys58, Cys41–Cys53, Cys42–Cys80, and Cys47–Cys62.

This sequence belongs to the venom protein 11 family. 01 (wap-1) subfamily. Contains 5 disulfide bonds. As to expression, expressed by the venom gland.

It is found in the secreted. In terms of biological role, has antibacterial activity. The chain is U15-lycotoxin-Ls1d from Lycosa singoriensis (Wolf spider).